We begin with the raw amino-acid sequence, 727 residues long: Putative E3 ubiquitin-protein ligase UNKL (727 aa).

The segment at Met1–Lys21 is disordered. 4 C3H1-type zinc fingers span residues Tyr75–Thr104, Tyr115–Leu145, Gln243–Thr277, and Ile285–Lys313. The span at Ser330 to Gly339 shows a compositional bias: polar residues. Disordered stretches follow at residues Ser330–Gln360, Leu446–Gly514, and Ser543–Ser562. Low complexity predominate over residues Ser463 to Ser495. Residues Cys686–Lys721 form an RING-type zinc finger.

This sequence belongs to the unkempt family. Interacts with the GTP-bound form of Rac1. Interacts with Baf60b/Smarcd2. Post-translationally, ubiquitination is enhanced by activated Rac1. The presence of the RING finger domain is not essential for ubiquitination to occur. As to expression, ubiquitous.

It is found in the cytoplasm. The protein resides in the nucleus. The protein operates within protein modification; protein ubiquitination. Its function is as follows. May participate in a protein complex showing an E3 ligase activity regulated by Rac1. Ubiquitination is directed towards itself and possibly other substrates, such as Baf60b/Smarcd2. Intrinsic E3 ligase activity has not been proven. In Mus musculus (Mouse), this protein is Putative E3 ubiquitin-protein ligase UNKL (Unkl).